The sequence spans 504 residues: Probable cytosol aminopeptidase (504 aa).

Residues lysine 268 and aspartate 273 each coordinate Mn(2+). Residue lysine 280 is part of the active site. 3 residues coordinate Mn(2+): aspartate 291, aspartate 350, and glutamate 352. Arginine 354 is an active-site residue.

Belongs to the peptidase M17 family. Requires Mn(2+) as cofactor.

It is found in the cytoplasm. It carries out the reaction Release of an N-terminal amino acid, Xaa-|-Yaa-, in which Xaa is preferably Leu, but may be other amino acids including Pro although not Arg or Lys, and Yaa may be Pro. Amino acid amides and methyl esters are also readily hydrolyzed, but rates on arylamides are exceedingly low.. The enzyme catalyses Release of an N-terminal amino acid, preferentially leucine, but not glutamic or aspartic acids.. Its function is as follows. Presumably involved in the processing and regular turnover of intracellular proteins. Catalyzes the removal of unsubstituted N-terminal amino acids from various peptides. This chain is Probable cytosol aminopeptidase, found in Psychromonas ingrahamii (strain DSM 17664 / CCUG 51855 / 37).